Consider the following 732-residue polypeptide: Cyclopenase asqI (732 aa).

The Zn(2+) site is built by His-168, His-172, and His-200.

Belongs to the tyrosinase family. The cofactor is Zn(2+).

The catalysed reaction is (-)-cyclopenine = viridicatin + methyl isocyanate + H(+). The enzyme catalyses (-)-4'-methoxycyclopenine = 4'-methoxyviridicatin + methyl isocyanate + H(+). It functions in the pathway secondary metabolite biosynthesis. Its pathway is alkaloid biosynthesis. The protein operates within mycotoxin biosynthesis. In terms of biological role, cyclopenase; part of the gene cluster that mediates the biosynthesis of the aspoquinolone mycotoxins. Within the pathway, the cyclopenase asqI catalyzes the conversion of 4'-methoxycyclopenin into 4'-methoxyviridicatin. Cyclopenin can also be converted into viridicatin by asqI. The first step of the pathway is catalyzed by the nonribosomal peptide synthetase asqK that condenses anthranilic acid and O-methyl-L-tyrosine to produce 4'-methoxycyclopeptin. 4'-methoxycyclopeptin is then converted to 4'-methoxydehydrocyclopeptin by the ketoglutarate-dependent dioxygenase asqJ. AsqJ also converts its first product 4'-methoxydehydrocyclopeptin to 4'-methoxycyclopenin. The following conversion of 4'-methoxycyclopenin into 4'-methoxyviridicatin is catalyzed by the cyclopenase asqI. 4'-methoxyviridicatin is the precursor of quinolone natural products, and is further converted to quinolinone B. The prenyltransferase asqH1 then catalyzes the canonical Friedel-Crafts alkylation of quinolinone B with dimethylallyl cation to yield dimethylallyl quinolone, which is subjected to FAD-dependent dehydrogenation by the FAD-linked oxidoreductase asqF to yield conjugated aryl diene. The delta(3') double bond then serves as the site of the second alkylation with DMAPP catalyzed by the prenyltransferase asqH2 to yield a carbenium ion intermediate, which can be attacked by H(2)O to yield a styrenyl quinolone containing a C3'-hydroxyprenyl chain. The FAD-dependent monooxygenase asqG performs epoxidation of the terminal C7'-C8' olefin. Finally, after dehydratation of the epoxide at C3 by asqC, the quinolone epoxide rearrangement protein asqO catalyzes an enzymatic 3-exo-tet cyclization to yield the cyclopropyl-THF ring system in aspoquinolone. In Emericella nidulans (strain FGSC A4 / ATCC 38163 / CBS 112.46 / NRRL 194 / M139) (Aspergillus nidulans), this protein is Cyclopenase asqI.